The primary structure comprises 505 residues: Nicotinamide phosphoribosyltransferase (505 aa).

Position 196 (Arg-196) interacts with diphosphate. A beta-nicotinamide D-ribonucleotide-binding site is contributed by Asp-219. Residues His-246 and Arg-314 each coordinate diphosphate. Beta-nicotinamide D-ribonucleotide is bound by residues 314–316 (RPD), 369–370 (GD), and Arg-408.

It belongs to the NAPRTase family.

The enzyme catalyses beta-nicotinamide D-ribonucleotide + diphosphate = 5-phospho-alpha-D-ribose 1-diphosphate + nicotinamide + H(+). It participates in cofactor biosynthesis; NAD(+) biosynthesis; nicotinamide D-ribonucleotide from 5-phospho-alpha-D-ribose 1-diphosphate and nicotinamide: step 1/1. With respect to regulation, 10-fold more active in the presence of saturating ATP. In terms of biological role, catalyzes the condensation of nicotinamide with 5-phosphoribosyl-1-pyrophosphate to yield nicotinamide mononucleotide, an intermediate in the biosynthesis of NAD. Functions in the nondeamidating salvage pathway for production of NAD from nicotinamide. Displays a strict preference for nicotinamide over nicotinate substrate. The chain is Nicotinamide phosphoribosyltransferase from Acinetobacter baylyi (strain ATCC 33305 / BD413 / ADP1).